We begin with the raw amino-acid sequence, 532 residues long: Telomerase Cajal body protein 1 (532 aa).

The tract at residues 1–48 (MKTSEELRLAPDSLPSDLVPAPVLQASPADKNTDSEPVPPPCGGDDQL) is disordered. 3 positions are modified to phosphoserine: Ser27, Ser61, and Ser83. The segment at 83–115 (SPRIEEQEVPENASLPVEETNRPELESGEAMEG) is disordered. WD repeat units lie at residues 151–190 (RSEN…YSES), 206–251 (EGDT…LRAS), 256–297 (NHLD…RDCE), 307–348 (GQSG…ALLG), 349–389 (GHQG…HLLW), and 395–434 (VTTN…SDCK). Thr474 carries the post-translational modification Phosphothreonine. Ser476 is subject to Phosphoserine. A disordered region spans residues 505–532 (CGGGPDPSNPDEDQDEKGQGRTEAVGMS).

This sequence belongs to the TCAB1 family. Component of the telomerase holoenzyme complex composed of one molecule of TERT, one molecule of WRAP53/TCAB1, two molecules of H/ACA ribonucleoprotein complex subunits DKC1, NOP10, NHP2 and GAR1, and a telomerase RNA template component (TERC). The telomerase holoenzyme complex is associated with TEP1, SMG6/EST1A and POT1. Interacts with the chaperonin-containing T-complex (TRiC) complex; which mediates the folding of WRAP53/TCAB1. Interacts with COIL. Interacts with SMN1. Interacts with RNF8. Interacts with histone H2AX. In terms of processing, phosphorylated at Ser-61 by ATM in response to DNA damage, promoting its interaction with histone H2AX and localization to sites of DNA double-strand breaks.

The protein localises to the nucleus. Its subcellular location is the cajal body. The protein resides in the chromosome. It localises to the telomere. RNA chaperone that plays a key role in telomere maintenance and RNA localization to Cajal bodies. Specifically recognizes and binds the Cajal body box (CAB box) present in both small Cajal body RNAs (scaRNAs) and telomerase RNA template component (TERC). Essential component of the telomerase holoenzyme complex, a ribonucleoprotein complex essential for the replication of chromosome termini that elongates telomeres in most eukaryotes. In the telomerase holoenzyme complex, required to stimulate the catalytic activity of the complex. Acts by specifically binding the CAB box of the TERC RNA and controlling the folding of the CR4/CR5 region of the TERC RNA, a critical step for telomerase activity. In addition, also controls telomerase holoenzyme complex localization to Cajal body. During S phase, required for delivery of TERC to telomeres during S phase and for telomerase activity. In addition to its role in telomere maintenance, also required for Cajal body formation, probably by mediating localization of scaRNAs to Cajal bodies. Also plays a role in DNA repair: phosphorylated by ATM in response to DNA damage and relocalizes to sites of DNA double-strand breaks to promote the repair of DNA double-strand breaks. Acts by recruiting the ubiquitin ligase RNF8 to DNA breaks and promote both homologous recombination (HR) and non-homologous end joining (NHEJ). The polypeptide is Telomerase Cajal body protein 1 (Rattus norvegicus (Rat)).